Here is a 531-residue protein sequence, read N- to C-terminus: T-complex protein 1 subunit zeta (531 aa).

A2 carries the post-translational modification N-acetylalanine. K5 is modified (N6-acetyllysine). An ADP-binding site is contributed by G39. ATP is bound at residue G39. D90 serves as a coordination point for Mg(2+). 6 residues coordinate ADP: G91, T92, T93, S94, T158, and K159. 3 residues coordinate ATP: G91, T92, and T93. K199 carries the post-translational modification N6-acetyllysine. Position 205 is a phosphoserine (S205). Residue K251 forms a Glycyl lysine isopeptide (Lys-Gly) (interchain with G-Cter in SUMO2) linkage. 4 positions are modified to N6-acetyllysine: K287, K365, K377, and K388. A411 contacts ADP. The ATP site is built by A411, G412, D496, and K501. D496 is an ADP binding site.

It belongs to the TCP-1 chaperonin family. Component of the chaperonin-containing T-complex (TRiC), a hexadecamer composed of two identical back-to-back stacked rings enclosing a protein folding chamber. Each ring is made up of eight different subunits: TCP1/CCT1, CCT2, CCT3, CCT4, CCT5, CCT6A/CCT6, CCT7, CCT8. Interacts with PACRG.

It localises to the cytoplasm. The enzyme catalyses ATP + H2O = ADP + phosphate + H(+). Its function is as follows. Component of the chaperonin-containing T-complex (TRiC), a molecular chaperone complex that assists the folding of actin, tubulin and other proteins upon ATP hydrolysis. The TRiC complex mediates the folding of WRAP53/TCAB1, thereby regulating telomere maintenance. In Oryctolagus cuniculus (Rabbit), this protein is T-complex protein 1 subunit zeta (CCT6).